A 318-amino-acid chain; its full sequence is Acetyl-coenzyme A carboxylase carboxyl transferase subunit alpha (318 aa).

The region spanning 31–292 (DLTNEIEKLE…NKTITKSLHA (262 aa)) is the CoA carboxyltransferase C-terminal domain.

This sequence belongs to the AccA family. As to quaternary structure, acetyl-CoA carboxylase is a heterohexamer composed of biotin carboxyl carrier protein (AccB), biotin carboxylase (AccC) and two subunits each of ACCase subunit alpha (AccA) and ACCase subunit beta (AccD).

The protein resides in the cytoplasm. It carries out the reaction N(6)-carboxybiotinyl-L-lysyl-[protein] + acetyl-CoA = N(6)-biotinyl-L-lysyl-[protein] + malonyl-CoA. It participates in lipid metabolism; malonyl-CoA biosynthesis; malonyl-CoA from acetyl-CoA: step 1/1. Functionally, component of the acetyl coenzyme A carboxylase (ACC) complex. First, biotin carboxylase catalyzes the carboxylation of biotin on its carrier protein (BCCP) and then the CO(2) group is transferred by the carboxyltransferase to acetyl-CoA to form malonyl-CoA. The polypeptide is Acetyl-coenzyme A carboxylase carboxyl transferase subunit alpha (Listeria monocytogenes serotype 4a (strain HCC23)).